The chain runs to 872 residues: Alanine--tRNA ligase (872 aa).

The Zn(2+) site is built by histidine 558, histidine 562, cysteine 660, and histidine 664.

It belongs to the class-II aminoacyl-tRNA synthetase family. It depends on Zn(2+) as a cofactor.

Its subcellular location is the cytoplasm. The enzyme catalyses tRNA(Ala) + L-alanine + ATP = L-alanyl-tRNA(Ala) + AMP + diphosphate. Its function is as follows. Catalyzes the attachment of alanine to tRNA(Ala) in a two-step reaction: alanine is first activated by ATP to form Ala-AMP and then transferred to the acceptor end of tRNA(Ala). Also edits incorrectly charged Ser-tRNA(Ala) and Gly-tRNA(Ala) via its editing domain. The protein is Alanine--tRNA ligase of Chlamydia pneumoniae (Chlamydophila pneumoniae).